The primary structure comprises 204 residues: Large ribosomal subunit protein uL4 (204 aa).

The interval 49 to 75 is disordered; it reads TKGRSEVSGGGKKPWRQKGRGGARAGS.

Belongs to the universal ribosomal protein uL4 family. As to quaternary structure, part of the 50S ribosomal subunit.

One of the primary rRNA binding proteins, this protein initially binds near the 5'-end of the 23S rRNA. It is important during the early stages of 50S assembly. It makes multiple contacts with different domains of the 23S rRNA in the assembled 50S subunit and ribosome. In terms of biological role, forms part of the polypeptide exit tunnel. The chain is Large ribosomal subunit protein uL4 from Campylobacter hominis (strain ATCC BAA-381 / DSM 21671 / CCUG 45161 / LMG 19568 / NCTC 13146 / CH001A).